Here is a 119-residue protein sequence, read N- to C-terminus: Holo-[acyl-carrier-protein] synthase (119 aa).

The Mg(2+) site is built by Asp-8 and Glu-58.

The protein belongs to the P-Pant transferase superfamily. AcpS family. The cofactor is Mg(2+).

Its subcellular location is the cytoplasm. It carries out the reaction apo-[ACP] + CoA = holo-[ACP] + adenosine 3',5'-bisphosphate + H(+). Functionally, transfers the 4'-phosphopantetheine moiety from coenzyme A to a Ser of acyl-carrier-protein. In Bacillus cytotoxicus (strain DSM 22905 / CIP 110041 / 391-98 / NVH 391-98), this protein is Holo-[acyl-carrier-protein] synthase.